Here is a 150-residue protein sequence, read N- to C-terminus: MIVTLTDQPFEPGVLVSAFCAGREETGAVATFIGLARAEQGAARALELEAYPGFTDAAITEIAQGAVTRFALQDVHIVHRVGVIAPGEAIVFVATAAAHRREAFEACDYLMDYLKSRAPFWKKEHGPEGPRWIEPTARDRTDAQRWDQEA.

Residues 35-37 (LAR), 99-100 (HR), lysine 115, and 122-124 (KKE) each bind substrate. The disordered stretch occupies residues 124-150 (EHGPEGPRWIEPTARDRTDAQRWDQEA). The segment covering 136–150 (TARDRTDAQRWDQEA) has biased composition (basic and acidic residues).

It belongs to the MoaE family. Heterotetramer of 2 MoaD subunits and 2 MoaE subunits. Also stable as homodimer. The enzyme changes between these two forms during catalysis.

The enzyme catalyses 2 [molybdopterin-synthase sulfur-carrier protein]-C-terminal-Gly-aminoethanethioate + cyclic pyranopterin phosphate + H2O = molybdopterin + 2 [molybdopterin-synthase sulfur-carrier protein]-C-terminal Gly-Gly + 2 H(+). Its pathway is cofactor biosynthesis; molybdopterin biosynthesis. Converts molybdopterin precursor Z into molybdopterin. This requires the incorporation of two sulfur atoms into precursor Z to generate a dithiolene group. The sulfur is provided by MoaD. This is Molybdopterin synthase catalytic subunit (moaE) from Caulobacter vibrioides (strain ATCC 19089 / CIP 103742 / CB 15) (Caulobacter crescentus).